The sequence spans 225 residues: Techylectin-like protein (225 aa).

A Fibrinogen C-terminal domain is found at C32–K225. C41 and C60 are joined by a disulfide. Residues R75–D77 carry the Cell attachment site motif. Positions 164 and 170 each coordinate Ca(2+). A disulfide bridge links C172 with C185.

As to expression, expressed by the venom gland.

Its subcellular location is the secreted. In terms of biological role, lectin involved in innate immunity. The sequence is that of Techylectin-like protein from Phoneutria nigriventer (Brazilian armed spider).